We begin with the raw amino-acid sequence, 283 residues long: Protease HtpX (283 aa).

2 helical membrane passes run 4 to 24 (IALF…ILSV) and 33 to 53 (GGIL…SLFM). A Zn(2+)-binding site is contributed by His139. Glu140 is an active-site residue. Residue His143 coordinates Zn(2+). 2 helical membrane passes run 147-167 (GDMV…IFLS) and 192-212 (FLVS…IAMW). Glu218 lines the Zn(2+) pocket.

Belongs to the peptidase M48B family. It depends on Zn(2+) as a cofactor.

It localises to the cell inner membrane. The sequence is that of Protease HtpX from Glaesserella parasuis serovar 5 (strain SH0165) (Haemophilus parasuis).